Consider the following 222-residue polypeptide: Ribosomal RNA small subunit methyltransferase G (222 aa).

Residues Gly-73, Leu-78, 124–125 (AE), and Arg-137 contribute to the S-adenosyl-L-methionine site.

This sequence belongs to the methyltransferase superfamily. RNA methyltransferase RsmG family.

Its subcellular location is the cytoplasm. Functionally, specifically methylates the N7 position of guanine in position 518 of 16S rRNA. This is Ribosomal RNA small subunit methyltransferase G from Acidothermus cellulolyticus (strain ATCC 43068 / DSM 8971 / 11B).